Consider the following 253-residue polypeptide: Adenosylcobinamide-GDP ribazoletransferase (253 aa).

Helical transmembrane passes span 33–53 (ISPIIVGISLGLIESVAYLIL), 106–126 (VGSGGIGLLLVYLSIQIVALL), 132–152 (LYTIFYLISSNVLSMSLSLYI), and 178–198 (ILLLELIPFISLYNVIVFIIF).

This sequence belongs to the CobS family. It depends on Mg(2+) as a cofactor.

The protein resides in the cell membrane. It catalyses the reaction alpha-ribazole + adenosylcob(III)inamide-GDP = adenosylcob(III)alamin + GMP + H(+). The enzyme catalyses alpha-ribazole 5'-phosphate + adenosylcob(III)inamide-GDP = adenosylcob(III)alamin 5'-phosphate + GMP + H(+). It functions in the pathway cofactor biosynthesis; adenosylcobalamin biosynthesis; adenosylcobalamin from cob(II)yrinate a,c-diamide: step 7/7. Joins adenosylcobinamide-GDP and alpha-ribazole to generate adenosylcobalamin (Ado-cobalamin). Also synthesizes adenosylcobalamin 5'-phosphate from adenosylcobinamide-GDP and alpha-ribazole 5'-phosphate. This chain is Adenosylcobinamide-GDP ribazoletransferase, found in Saccharolobus solfataricus (strain ATCC 35092 / DSM 1617 / JCM 11322 / P2) (Sulfolobus solfataricus).